We begin with the raw amino-acid sequence, 929 residues long: Probable LRR receptor-like serine/threonine-protein kinase At1g67720 (929 aa).

Positions 1-21 (MGLCLAQLAVTCLFLVPFVLS) are cleaved as a signal peptide. Topologically, residues 22–531 (QVTEFVSIDC…NEAQRKHFWQ (510 aa)) are extracellular. 7 N-linked (GlcNAc...) asparagine glycosylation sites follow: Asn36, Asn173, Asn236, Asn293, Asn320, Asn332, and Asn407. LRR repeat units lie at residues 413 to 437 (PPRV…INYM), 438 to 460 (EALT…MSKL), 461 to 484 (VNLK…LAHL), and 485 to 508 (PNLQ…LLKG). N-linked (GlcNAc...) asparagine glycosylation is present at Asn494. A helical membrane pass occupies residues 532-552 (ILGISIAAVAILLLLVGGSLV). Residues 553–929 (LLCALRKTKR…SRNSLAPAAR (377 aa)) are Cytoplasmic-facing. Residues 606–880 (DNFSKKVGRG…EVIVAIQDAI (275 aa)) enclose the Protein kinase domain. Residues 612 to 620 (VGRGSFGSV) and Lys634 each bind ATP. The residue at position 679 (Tyr679) is a Phosphotyrosine. Catalysis depends on Asp731, which acts as the Proton acceptor. Phosphoserine is present on residues Ser735 and Ser764. Phosphothreonine is present on Thr770. Tyr778 is modified (phosphotyrosine).

Belongs to the protein kinase superfamily. Ser/Thr protein kinase family.

It is found in the membrane. The enzyme catalyses L-seryl-[protein] + ATP = O-phospho-L-seryl-[protein] + ADP + H(+). The catalysed reaction is L-threonyl-[protein] + ATP = O-phospho-L-threonyl-[protein] + ADP + H(+). The polypeptide is Probable LRR receptor-like serine/threonine-protein kinase At1g67720 (Arabidopsis thaliana (Mouse-ear cress)).